Consider the following 483-residue polypeptide: ATP-dependent RNA helicase DDX25 (483 aa).

The Nuclear export signal motif lies at 61 to 74 (LAANSLLNKLIHQS). A Q motif motif is present at residues 97–125 (KTFEELRLKEELLKGIYAMGFNRPSKIQE). The Nuclear localization signal motif lies at 100-114 (EELRLKEELLKGIYA). A Helicase ATP-binding domain is found at 130–300 (MMLAHPPQNL…ERIIPDPNVI (171 aa)). 143 to 150 (SQSGTGKT) serves as a coordination point for ATP. The DEAD box motif lies at 247 to 250 (DEAD). A Helicase C-terminal domain is found at 311–478 (NIRQYYVLCE…QLNAEDMDEI (168 aa)).

It belongs to the DEAD box helicase family. Phosphorylated on threonine residues. The phosphorylated form is found in the cytoplasm but not in the nucleus. Highly expressed in the Leydig and germ cells of the testis and weakly expressed in the pituitary and hypothalamus.

Its subcellular location is the cytoplasm. The protein resides in the nucleus. The enzyme catalyses ATP + H2O = ADP + phosphate + H(+). Its function is as follows. ATP-dependent RNA helicase. Required for mRNA export and translation regulation during spermatid development. This Homo sapiens (Human) protein is ATP-dependent RNA helicase DDX25 (DDX25).